Reading from the N-terminus, the 253-residue chain is Methionine-R-sulfoxide reductase B3, mitochondrial (253 aa).

Residues 1-56 (MPPAAPSVARSREGGGIGQRRLVFPKSARRTLPCPIALCLGLCLAAAAATTTRASA) form the signal peptide. Residue lysine 102 is modified to N6-acetyllysine. Residues 107–229 (QQELRKRLTP…NSASLSFTPA (123 aa)) form the MsrB domain. Cysteine 146, cysteine 149, cysteine 195, and cysteine 198 together coordinate Zn(2+). The active-site Nucleophile is the cysteine 218. A disordered region spans residues 227–253 (TPADSSEAEGSGIKESGSPAAADRAEL). Serine 244 bears the Phosphoserine mark. The short motif at 250–253 (RAEL) is the Endoplasmic reticulum retention signal element.

The protein belongs to the MsrB Met sulfoxide reductase family. In terms of assembly, monomer. The cofactor is Zn(2+). Widely expressed. Detected in the sensory epithelia of the organ of Corti and vestibular end organs as early as P2 up to adulthood (at protein level). In the organ of Corti, present in inner and outer hair cells and, to a lesser extent, in supporting cells (at protein level). In hair cells, distributed throughout the cell body. Barely detectable level in stereocilia. Also observed in spiral ganglion neurons, but not in the stria vascularis. In the vestibular end organs, found throughout the sensory epithelium, but more intense expression in hair cells than in supporting cells (at protein level). In vestibular hair cells, present within cell bodies and to a lesser extent in kinocilia. Barely detectable in stereocilia.

It is found in the endoplasmic reticulum. It carries out the reaction L-methionyl-[protein] + [thioredoxin]-disulfide + H2O = L-methionyl-(R)-S-oxide-[protein] + [thioredoxin]-dithiol. The enzyme catalyses [thioredoxin]-disulfide + L-methionine + H2O = L-methionine (R)-S-oxide + [thioredoxin]-dithiol. Functionally, catalyzes the reduction of free and protein-bound methionine sulfoxide to methionine. The chain is Methionine-R-sulfoxide reductase B3, mitochondrial (Msrb3) from Mus musculus (Mouse).